A 158-amino-acid polypeptide reads, in one-letter code: Large ribosomal subunit protein bL21 (158 aa).

The segment at 127 to 158 (TQETKSAASVKKAAKKSAPQKQAAVASNSKED) is disordered. A compositionally biased stretch (low complexity) spans 131–158 (KSAASVKKAAKKSAPQKQAAVASNSKED).

The protein belongs to the bacterial ribosomal protein bL21 family. As to quaternary structure, part of the 50S ribosomal subunit. Contacts protein L20.

Functionally, this protein binds to 23S rRNA in the presence of protein L20. This is Large ribosomal subunit protein bL21 from Bartonella henselae (strain ATCC 49882 / DSM 28221 / CCUG 30454 / Houston 1) (Rochalimaea henselae).